We begin with the raw amino-acid sequence, 453 residues long: Bifunctional protein GlmU (453 aa).

Positions 1–226 (MKFSTVILAA…SIEVEGVNDR (226 aa)) are pyrophosphorylase. UDP-N-acetyl-alpha-D-glucosamine-binding positions include 8-11 (LAAG), lysine 22, glutamine 73, 78-79 (GT), 100-102 (YGD), glycine 137, glutamate 151, asparagine 166, and asparagine 224. Aspartate 102 is a binding site for Mg(2+). Asparagine 224 provides a ligand contact to Mg(2+). Residues 227–247 (IQLARLERAFQARQAKKLLEQ) form a linker region. The N-acetyltransferase stretch occupies residues 248–453 (GVMLRDPARF…AGWQRPAKKK (206 aa)). Residues arginine 330 and lysine 348 each contribute to the UDP-N-acetyl-alpha-D-glucosamine site. The Proton acceptor role is filled by histidine 360. 2 residues coordinate UDP-N-acetyl-alpha-D-glucosamine: tyrosine 363 and asparagine 374. Residues alanine 377, 383-384 (NY), serine 402, alanine 420, and arginine 437 contribute to the acetyl-CoA site.

It in the N-terminal section; belongs to the N-acetylglucosamine-1-phosphate uridyltransferase family. This sequence in the C-terminal section; belongs to the transferase hexapeptide repeat family. As to quaternary structure, homotrimer. Mg(2+) serves as cofactor.

The protein localises to the cytoplasm. It catalyses the reaction alpha-D-glucosamine 1-phosphate + acetyl-CoA = N-acetyl-alpha-D-glucosamine 1-phosphate + CoA + H(+). It carries out the reaction N-acetyl-alpha-D-glucosamine 1-phosphate + UTP + H(+) = UDP-N-acetyl-alpha-D-glucosamine + diphosphate. Its pathway is nucleotide-sugar biosynthesis; UDP-N-acetyl-alpha-D-glucosamine biosynthesis; N-acetyl-alpha-D-glucosamine 1-phosphate from alpha-D-glucosamine 6-phosphate (route II): step 2/2. The protein operates within nucleotide-sugar biosynthesis; UDP-N-acetyl-alpha-D-glucosamine biosynthesis; UDP-N-acetyl-alpha-D-glucosamine from N-acetyl-alpha-D-glucosamine 1-phosphate: step 1/1. It participates in bacterial outer membrane biogenesis; LPS lipid A biosynthesis. Its function is as follows. Catalyzes the last two sequential reactions in the de novo biosynthetic pathway for UDP-N-acetylglucosamine (UDP-GlcNAc). The C-terminal domain catalyzes the transfer of acetyl group from acetyl coenzyme A to glucosamine-1-phosphate (GlcN-1-P) to produce N-acetylglucosamine-1-phosphate (GlcNAc-1-P), which is converted into UDP-GlcNAc by the transfer of uridine 5-monophosphate (from uridine 5-triphosphate), a reaction catalyzed by the N-terminal domain. The chain is Bifunctional protein GlmU from Vibrio cholerae serotype O1 (strain M66-2).